Here is an 89-residue protein sequence, read N- to C-terminus: Extender of the chronological lifespan protein ecl3 (89 aa).

The protein belongs to the ecl1 family.

It localises to the nucleus. Involved in chronological cell aging. In Schizosaccharomyces pombe (strain 972 / ATCC 24843) (Fission yeast), this protein is Extender of the chronological lifespan protein ecl3 (ecl3).